We begin with the raw amino-acid sequence, 104 residues long: Integration host factor subunit alpha (104 aa).

A disordered region spans residues 51–70; sequence GNFQLRDKPQRPGRNPKTGE.

This sequence belongs to the bacterial histone-like protein family. Heterodimer of an alpha and a beta chain.

This protein is one of the two subunits of integration host factor, a specific DNA-binding protein that functions in genetic recombination as well as in transcriptional and translational control. The protein is Integration host factor subunit alpha of Ralstonia nicotianae (strain ATCC BAA-1114 / GMI1000) (Ralstonia solanacearum).